A 508-amino-acid polypeptide reads, in one-letter code: Maturase K (508 aa).

Belongs to the intron maturase 2 family. MatK subfamily.

The protein resides in the plastid. It localises to the chloroplast. Usually encoded in the trnK tRNA gene intron. Probably assists in splicing its own and other chloroplast group II introns. This chain is Maturase K, found in Gordonia lasianthus (Loblolly bay).